Here is an 886-residue protein sequence, read N- to C-terminus: Peptidyl-lysine N-acetyltransferase PatZ (886 aa).

The ATP-grasp domain maps to 487–523; the sequence is QPILQAYGMNTLPTWIASDSTEAVHIAEQIGYPVALK. In terms of domain architecture, N-acetyltransferase spans 726 to 881; the sequence is CLFRPILPED…GIVGLTLNLA (156 aa).

This sequence in the N-terminal section; belongs to the acetate CoA ligase alpha subunit family. In the central section; belongs to the acetate CoA ligase beta subunit family. Stable tetramer in solution. Oligomerizes to an octameric form by autoacetylation. Post-translationally, autoacetylated. Deacetylated by CobB.

It catalyses the reaction L-lysyl-[protein] + acetyl-CoA = N(6)-acetyl-L-lysyl-[protein] + CoA + H(+). In terms of biological role, catalyzes the acetyl-CoA-dependent acetylation of lysine residues of a large number of target proteins. Acetylates RNase R in exponential phase cells and RNase II. Required for the glucose-dependent acetylation on multiple lysines of alpha, beta and beta' RNAP subunits. Also acetylates acetyl-coenzyme A synthetase (Acs) and the chromosomal replication initiator protein DnaA, and inhibits their activity. Overexpression leads to the acetylation of a large number of additional proteins and inhibits motility. The sequence is that of Peptidyl-lysine N-acetyltransferase PatZ from Escherichia coli (strain K12).